The sequence spans 90 residues: Albumin (90 aa).

S5 is modified (phosphoserine). Ca(2+) contacts are provided by E6 and D13. Residues 25 to 90 (LLRHLVDEPQ…LVASTQAALA (66 aa)) enclose the Albumin domain. S61 bears the Phosphoserine mark. Phosphothreonine is present on residues T62 and T64. K80 is modified (N6-methyllysine).

Belongs to the ALB/AFP/VDB family. As to quaternary structure, interacts with FCGRT; this interaction regulates ALB homeostasis. Interacts with TASOR. In plasma, occurs in a covalently-linked complex with chromophore-bound alpha-1-microglobulin; this interaction does not prevent fatty acid binding to ALB. Plasma.

Its subcellular location is the secreted. In terms of biological role, binds water, Ca(2+), Na(+), K(+), fatty acids, hormones, bilirubin and drugs. Its main function is the regulation of the colloidal osmotic pressure of blood. Major zinc transporter in plasma, typically binds about 80% of all plasma zinc. Major calcium and magnesium transporter in plasma, binds approximately 45% of circulating calcium and magnesium in plasma. Potentially has more than two calcium-binding sites and might additionally bind calcium in a non-specific manner. The shared binding site between zinc and calcium suggests a crosstalk between zinc and calcium transport in the blood. The rank order of affinity is zinc &gt; calcium &gt; magnesium. Binds to the bacterial siderophore enterobactin and inhibits enterobactin-mediated iron uptake of E.coli from ferric transferrin, and may thereby limit the utilization of iron and growth of enteric bacteria such as E.coli. Does not prevent iron uptake by the bacterial siderophore aerobactin. The chain is Albumin from Capra hircus (Goat).